Consider the following 160-residue polypeptide: 2-amino-4-hydroxy-6-hydroxymethyldihydropteridine pyrophosphokinase (160 aa).

Belongs to the HPPK family. As to quaternary structure, monomer.

It carries out the reaction 6-hydroxymethyl-7,8-dihydropterin + ATP = (7,8-dihydropterin-6-yl)methyl diphosphate + AMP + H(+). It participates in cofactor biosynthesis; tetrahydrofolate biosynthesis; 2-amino-4-hydroxy-6-hydroxymethyl-7,8-dihydropteridine diphosphate from 7,8-dihydroneopterin triphosphate: step 4/4. Functionally, catalyzes the transfer of pyrophosphate from adenosine triphosphate (ATP) to 6-hydroxymethyl-7,8-dihydropterin, an enzymatic step in folate biosynthesis pathway. In Haemophilus influenzae (strain ATCC 51907 / DSM 11121 / KW20 / Rd), this protein is 2-amino-4-hydroxy-6-hydroxymethyldihydropteridine pyrophosphokinase (folK).